A 156-amino-acid chain; its full sequence is Snaclec A2 (156 aa).

A signal peptide spans 1 to 23; it reads MGRLISVSFGLLVVFLSLSGTGA. 3 disulfides stabilise this stretch: cysteine 27-cysteine 38, cysteine 55-cysteine 154, and cysteine 129-cysteine 146. The C-type lectin domain occupies 34–155; that stretch reads HEGHCYKVFN…CGQPYRFTCE (122 aa).

Belongs to the snaclec family. In terms of assembly, heterodimer; disulfide-linked. As to expression, expressed by the venom gland.

The protein resides in the secreted. Its function is as follows. Interferes with one step of hemostasis (modulation of platelet aggregation, or coagulation cascade, for example). This chain is Snaclec A2, found in Macrovipera lebetinus (Levantine viper).